The chain runs to 468 residues: Lactate utilization protein B (468 aa).

4Fe-4S ferredoxin-type domains lie at 303–333 and 352–381; these read GTQFQSVLQCIRCAACINVCPVYRHIGGHAY and YENYKELPYASSLCGACTEACPVKIPLHEL. Positions 312, 315, 318, 322, 365, 368, and 372 each coordinate [4Fe-4S] cluster. The tract at residues 442 to 468 is disordered; sequence PAWTDSKDLPQPNKQTVRDWFKKRGNA. Positions 457-468 are enriched in basic and acidic residues; the sequence is TVRDWFKKRGNA.

Belongs to the LutB/YkgF family.

In terms of biological role, is involved in L-lactate degradation and allows cells to grow with lactate as the sole carbon source. Has probably a role as an electron transporter during oxidation of L-lactate. The chain is Lactate utilization protein B from Exiguobacterium sp. (strain ATCC BAA-1283 / AT1b).